A 418-amino-acid chain; its full sequence is AP-3 complex subunit mu-1 (418 aa).

In terms of domain architecture, MHD spans 176 to 417; it reads NNEAYFDVIE…ITKAGKFQVR (242 aa).

The protein belongs to the adaptor complexes medium subunit family. As to quaternary structure, the AP-3 complex associates with the BLOC-1 complex.

Its subcellular location is the golgi apparatus. The protein localises to the cytoplasmic vesicle membrane. Part of the AP-3 complex, an adaptor-related complex which is not clathrin-associated. The complex is associated with the Golgi region as well as more peripheral structures. It facilitates the budding of vesicles from the Golgi membrane and may be directly involved in trafficking to lysosomes. In concert with the BLOC-1 complex, AP-3 is required to target cargos into vesicles assembled at cell bodies for delivery into neurites and nerve terminals. This chain is AP-3 complex subunit mu-1 (AP3M1), found in Gallus gallus (Chicken).